Consider the following 389-residue polypeptide: snRNA-activating protein complex subunit 1 (389 aa).

A compositionally biased stretch (low complexity) spans 1-15; it reads MGTPAGAGTRPTGAG. 3 disordered regions span residues 1–22, 245–276, and 290–389; these read MGTPAGAGTRPTGAGTVEGVGI, WHKERKNPSLKPKLKDGEENGEGSSEEPERCE, and SAVV…KRKC. Residues 20–187 are SNAPC3-binding; the sequence is VGIPPGLQTD…QKFKDPNDRV (168 aa). Residues 183–287 form an SNAPC4-binding region; that stretch reads PNDRVMKLIT…AVSLAKIKAK (105 aa). Positions 245–262 are enriched in basic and acidic residues; it reads WHKERKNPSLKPKLKDGE. A phosphoserine mark is found at S308 and S309.

In terms of assembly, part of the SNAPc complex composed of 5 subunits: SNAPC1, SNAPC2, SNAPC3, SNAPC4 and SNAPC5. SNAPC1 interacts with SNAPC3, SNAPC4 and TBP.

The protein localises to the nucleus. Part of the SNAPc complex required for the transcription of both RNA polymerase II and III small-nuclear RNA genes. Binds to the proximal sequence element (PSE), a non-TATA-box basal promoter element common to these 2 types of genes. Recruits TBP and BRF2 to the U6 snRNA TATA box. The chain is snRNA-activating protein complex subunit 1 (Snapc1) from Mus musculus (Mouse).